We begin with the raw amino-acid sequence, 91 residues long: uncharacterized protein (91 aa).

The next 3 helical transmembrane spans lie at 9 to 29, 44 to 64, and 71 to 91; these read VLWGAVIAAFILSIVFYPFLP, LTVNKLAGTVMLPVLMVVFAW, and QFVFAVYILLICHIVVLCLAL.

It localises to the cell membrane. This is an uncharacterized protein from Bacillus subtilis (strain 168).